Reading from the N-terminus, the 254-residue chain is NFU1 iron-sulfur cluster scaffold homolog, mitochondrial (254 aa).

A mitochondrion-targeting transit peptide spans 1–9 (MAATARRGW). Residues 173–241 (IKELLDTRIR…IPEVEGVEQV (69 aa)) form a nifU region. 2 residues coordinate [4Fe-4S] cluster: cysteine 210 and cysteine 213.

It belongs to the NifU family. As to quaternary structure, monomer and homohexamer; the apo-NFU1 is a monomer, while the holo-NFU1 is a hexamer composed of a trimer of dimer that is probably linked by some 4Fe-4S cluster. Interacts with HIRA and EPM2A/laforin. Interacts with BOLA3. Interacts with HSPA9. Ubiquitous. Expression in adult lung is weak compared to fetal lung.

The protein resides in the mitochondrion. It localises to the cytoplasm. The protein localises to the cytosol. Its function is as follows. Iron-sulfur cluster scaffold protein which can assemble [4Fe-4S] clusters and deliver them to target proteins. The sequence is that of NFU1 iron-sulfur cluster scaffold homolog, mitochondrial (NFU1) from Homo sapiens (Human).